A 798-amino-acid chain; its full sequence is Protocadherin beta-14 (798 aa).

The first 26 residues, 1–26 (MEIRGALDLRKRQVLIFLVLLGLSRA), serve as a signal peptide directing secretion. Residues 27 to 686 (GTESAHYSVA…APAQAQADSL (660 aa)) lie on the Extracellular side of the membrane. 5 consecutive Cadherin domains span residues 35–133 (VAEE…SPTF), 138–242 (ILIK…APEF), 247–347 (YEVQ…PPEV), 352–451 (ITKR…APTF), and 456–561 (YTLF…SPFV). Cys96 and Cys102 are disulfide-bonded. Asn169 is a glycosylation site (N-linked (GlcNAc...) asparagine). N-linked (GlcNAc...) asparagine glycans are attached at residues Asn359, Asn418, Asn436, Asn487, and Asn567. In terms of domain architecture, Cadherin 6 spans 568–671 (GSAPCTELVP…LVDGFSQPYL (104 aa)). A helical transmembrane segment spans residues 687-711 (TVYLVVALASVSSLFLFSVLLFVAV). The Cytoplasmic segment spans residues 712-798 (RLCRRSRAAS…FRNSFGLNIQ (87 aa)).

The protein resides in the cell membrane. Functionally, potential calcium-dependent cell-adhesion protein. May be involved in the establishment and maintenance of specific neuronal connections in the brain. This Homo sapiens (Human) protein is Protocadherin beta-14 (PCDHB14).